Consider the following 326-residue polypeptide: Tagatose 1,6-diphosphate aldolase (326 aa).

Belongs to the aldolase LacD family.

The enzyme catalyses D-tagatofuranose 1,6-bisphosphate = D-glyceraldehyde 3-phosphate + dihydroxyacetone phosphate. Its pathway is carbohydrate metabolism; D-tagatose 6-phosphate degradation; D-glyceraldehyde 3-phosphate and glycerone phosphate from D-tagatose 6-phosphate: step 2/2. In Staphylococcus aureus (strain bovine RF122 / ET3-1), this protein is Tagatose 1,6-diphosphate aldolase.